Reading from the N-terminus, the 452-residue chain is MGKYFGTDGVRGEANVELTPEMAFKLGRFGGYVLSQHELGTPKVYVGRDTRISGQMLASSLISGLLSVGIEVYDLGVIATPGVAYLVKKDGASAGVMISASHNPALDNGIKFFGGDGYKLEDEKELEIEALIDAEEDTLPRPSAQGLGMLHDYIEGVRKYQAFLKTTAEGNFEGYKVVLDTANGAAYTSARAVFADLEANLTVIGENPDGLNINVKVGSTHPEAMAKKVVETGSDLGLAFDGDADRLIAVDENGEIVDGDKIMFIVGKYLLGQGKLAQDTLVTTVMSNLGFHLALEEAGINSVITAVGDRYVVEEMKKNNYNFGGEQSGHMIFLDYNTTGDGQLSAIQLLKVMRETGKSLSELASEVTIYPQKLVNVRVKDNAAKKSAMDVPAIQKVISEMETSMNGKGRILVRPSGTEPLLRVMAEAPTHEEVNHVVDTIVEVVEAEIGVK.

The Phosphoserine intermediate role is filled by S101. Residues S101, D241, D243, and D245 each contribute to the Mg(2+) site. Phosphoserine is present on S101.

The protein belongs to the phosphohexose mutase family. Mg(2+) is required as a cofactor. In terms of processing, activated by phosphorylation.

The catalysed reaction is alpha-D-glucosamine 1-phosphate = D-glucosamine 6-phosphate. Functionally, catalyzes the conversion of glucosamine-6-phosphate to glucosamine-1-phosphate. The sequence is that of Phosphoglucosamine mutase from Lactococcus lactis subsp. lactis (strain IL1403) (Streptococcus lactis).